Consider the following 172-residue polypeptide: Endoribonuclease YbeY (172 aa).

His124, His128, and His134 together coordinate Zn(2+).

This sequence belongs to the endoribonuclease YbeY family. Zn(2+) is required as a cofactor.

It localises to the cytoplasm. Its function is as follows. Single strand-specific metallo-endoribonuclease involved in late-stage 70S ribosome quality control and in maturation of the 3' terminus of the 16S rRNA. In Rhodopseudomonas palustris (strain BisA53), this protein is Endoribonuclease YbeY.